The following is a 343-amino-acid chain: N-malonyltransferase FDB2 (343 aa).

Catalysis depends on cysteine 107, which acts as the Acyl-thioester intermediate. Histidine 155 acts as the Proton acceptor in catalysis. The active site involves aspartate 170.

The protein belongs to the arylamine N-acetyltransferase family.

It functions in the pathway xenobiotic degradation. Functionally, N-malonyltransferase; part of the Fusarium detoxification of benzoxazolinone cluster involved in the degradation of benzoxazolinones produced by the host plant. Maize, wheat, and rye produce the 2 benzoxazinone phytoanticipins 2,4-dihy-droxy-7-methoxy-1,4-benzoxazin-3-one (DIMBOA) and 2,4-dihydroxy-1,4-benzoxazin-3-one (DIBOA) that, due to their inherent instability once released, spontaneously degrade to the more stable corresponding benzoxazolinones, 6-methoxy-2-benzoxazolinone (MBOA) and 2-benzoxazolinone (BOA), respectively. The first step in the detoxification of benzoxazolinones involves the hydrolysis of the cyclic ester bond of benzoxazolinones by the gamma-lactamase FDB1 to aminophenols. FDB1 is able to convert BOA into 2-aminophenol (2-AP), as well as MBOA into 5-methoxy-2-aminophenol (2-AMP). The N-malonyltransferase FDB2 then metabolizes aminophenols via N-malonylation to non-toxic malonamic acids. FDB2 converts 2-AP into N-(2-hydroxyphenyl) malonamic acid (HPMA) and 2-AMP into N-(2-hydroxy-4-methoxyphenyl) malonamic acid (HMPMA). The cluster also contains 2 transcription factors (FDB3 and FPSE_08121), an aldo-keto reductase (FPSE_08125) that possibly associates with a ketone component of BOA and MBOA degradation, an esterase (FPSE_08126), an acyl-CoA transferase (FPSE_08120), a solute carrier protein (FPSE_08119) and a transmembrane transporter (FPSE_08127) proposed to shuttle metabolites of benzoxazolinone degradation. This is N-malonyltransferase FDB2 from Fusarium pseudograminearum (strain CS3096) (Wheat and barley crown-rot fungus).